The following is a 225-amino-acid chain: PKHD-type hydroxylase YbiX (225 aa).

The 100-residue stretch at Thr-78–Ser-177 folds into the Fe2OG dioxygenase domain. The Fe cation site is built by His-96, Asp-98, and His-158. Arg-168 contacts 2-oxoglutarate.

Fe(2+) serves as cofactor. Requires L-ascorbate as cofactor.

The chain is PKHD-type hydroxylase YbiX from Shigella sonnei (strain Ss046).